Consider the following 335-residue polypeptide: Galactinol synthase 2 (335 aa).

K103 is an active-site residue. D119, D121, and H257 together coordinate Mn(2+).

This sequence belongs to the glycosyltransferase 8 family. Galactosyltransferase subfamily. It depends on a divalent metal cation as a cofactor. As to expression, accumulates in mature seeds.

Its subcellular location is the cytoplasm. It carries out the reaction myo-inositol + UDP-alpha-D-galactose = alpha-D-galactosyl-(1-&gt;3)-1D-myo-inositol + UDP + H(+). Galactinol synthase involved in the biosynthesis of raffinose family oligosaccharides (RFOs) that function as osmoprotectants. Promotes stress tolerance of factors such as drought, chilling, salinity and methylviologen (MV), a superoxide radical generating drug, by mediating an increase in levels of the endogenous osmoprotective compounds, galactinol and raffinose. The chain is Galactinol synthase 2 (GOLS2) from Arabidopsis thaliana (Mouse-ear cress).